The sequence spans 295 residues: 4-hydroxy-tetrahydrodipicolinate synthase (295 aa).

Thr45 contacts pyruvate. Residue Tyr131 is the Proton donor/acceptor of the active site. Catalysis depends on Lys159, which acts as the Schiff-base intermediate with substrate. Val202 provides a ligand contact to pyruvate.

This sequence belongs to the DapA family. In terms of assembly, homotetramer; dimer of dimers.

The protein resides in the cytoplasm. It carries out the reaction L-aspartate 4-semialdehyde + pyruvate = (2S,4S)-4-hydroxy-2,3,4,5-tetrahydrodipicolinate + H2O + H(+). It functions in the pathway amino-acid biosynthesis; L-lysine biosynthesis via DAP pathway; (S)-tetrahydrodipicolinate from L-aspartate: step 3/4. Functionally, catalyzes the condensation of (S)-aspartate-beta-semialdehyde [(S)-ASA] and pyruvate to 4-hydroxy-tetrahydrodipicolinate (HTPA). This chain is 4-hydroxy-tetrahydrodipicolinate synthase, found in Methanothrix thermoacetophila (strain DSM 6194 / JCM 14653 / NBRC 101360 / PT) (Methanosaeta thermophila).